Consider the following 198-residue polypeptide: Dual specificity protein phosphatase 14 (198 aa).

The 142-residue stretch at 26-167 (GIAQITSSLF…LIDYERQLFG (142 aa)) folds into the Tyrosine-protein phosphatase domain. The active-site Phosphocysteine intermediate is the C111.

Belongs to the protein-tyrosine phosphatase family. Non-receptor class dual specificity subfamily. Interacts with CD28.

The catalysed reaction is O-phospho-L-tyrosyl-[protein] + H2O = L-tyrosyl-[protein] + phosphate. It catalyses the reaction O-phospho-L-seryl-[protein] + H2O = L-seryl-[protein] + phosphate. The enzyme catalyses O-phospho-L-threonyl-[protein] + H2O = L-threonyl-[protein] + phosphate. Functionally, involved in the inactivation of MAP kinases. Dephosphorylates ERK, JNK and p38 MAP-kinases. Plays a negative role in TCR signaling by dephosphorylating MAP3K7 adapter TAB1 leading to its inactivation. The sequence is that of Dual specificity protein phosphatase 14 (DUSP14) from Bos taurus (Bovine).